Consider the following 835-residue polypeptide: Beta-galactosidase (835 aa).

Residues methionine 1 to alanine 22 form the signal peptide. The active-site Proton donor is glutamate 180. The active-site Nucleophile is the glutamate 249. The region spanning arginine 749–serine 835 is the SUEL-type lectin domain.

Belongs to the glycosyl hydrolase 35 family.

It catalyses the reaction Hydrolysis of terminal non-reducing beta-D-galactose residues in beta-D-galactosides.. Functionally, involved in cell wall degradation. Degrades polysaccharides containing beta-(1--&gt;4)-linked galactans, acting as an exo-(1--&gt;4)-beta-D-galactanase. The polypeptide is Beta-galactosidase (Solanum lycopersicum (Tomato)).